Here is a 296-residue protein sequence, read N- to C-terminus: MIIHPNFDPVAIHLGPLAVRWYGLMYLVGFILAIVVGRLRLKLPHVAAQGWSAKDIDDMMFYGVLGVVLGGRLGYVLFYKADYYFSHPLDIFRVWEGGMSFHGGFLGVTLAMALFAWQRKRHWLEVTDFVAPMVPTGLAAGRLGNFINGELWGRVTSPDAPWAMLFPGASRDDAAWLAAHQDIAAKWNLNEVFLAHQMLPRHPSQLYEIALEGIALFFVLWFFSRKPRPMGAISALFLIGYGAARFTVEFAREPDDFLGLLTFGLSMGQWLSLPMIVAGVLMMIWAYRRGGAAKAA.

A run of 3 helical transmembrane segments spans residues 17-37, 59-79, and 97-117; these read LAVR…IVVG, MMFY…VLFY, and GGMS…LFAW. Position 142 (R142) interacts with a 1,2-diacyl-sn-glycero-3-phospho-(1'-sn-glycerol). Transmembrane regions (helical) follow at residues 230-250 and 265-285; these read MGAI…TVEF and LSMG…MMIW.

The protein belongs to the Lgt family.

The protein resides in the cell inner membrane. It carries out the reaction L-cysteinyl-[prolipoprotein] + a 1,2-diacyl-sn-glycero-3-phospho-(1'-sn-glycerol) = an S-1,2-diacyl-sn-glyceryl-L-cysteinyl-[prolipoprotein] + sn-glycerol 1-phosphate + H(+). Its pathway is protein modification; lipoprotein biosynthesis (diacylglyceryl transfer). In terms of biological role, catalyzes the transfer of the diacylglyceryl group from phosphatidylglycerol to the sulfhydryl group of the N-terminal cysteine of a prolipoprotein, the first step in the formation of mature lipoproteins. The protein is Phosphatidylglycerol--prolipoprotein diacylglyceryl transferase of Burkholderia thailandensis (strain ATCC 700388 / DSM 13276 / CCUG 48851 / CIP 106301 / E264).